A 261-amino-acid polypeptide reads, in one-letter code: Glucose 1-dehydrogenase A (261 aa).

An NADP(+)-binding site is contributed by 11 to 35 (VITGGSTGLGRAMAVRFGQEEAKVV). Substrate is bound at residue Ser145. Residue Tyr158 is the Proton acceptor of the active site.

The protein belongs to the short-chain dehydrogenases/reductases (SDR) family. Homotetramer.

The enzyme catalyses D-glucose + NAD(+) = D-glucono-1,5-lactone + NADH + H(+). The catalysed reaction is D-glucose + NADP(+) = D-glucono-1,5-lactone + NADPH + H(+). This chain is Glucose 1-dehydrogenase A (gdhA), found in Priestia megaterium (Bacillus megaterium).